The following is a 181-amino-acid chain: Putative D-tyrosyl-tRNA(Tyr) deacylase 2 (181 aa).

This sequence belongs to the DTD family. Highly divergent. Homodimer.

It is found in the cytoplasm. Its function is as follows. May hydrolyze D-tyrosyl-tRNA(Tyr) into D-tyrosine and free tRNA(Tyr). Could be a defense mechanism against a harmful effect of D-tyrosine. In Leishmania major, this protein is Putative D-tyrosyl-tRNA(Tyr) deacylase 2.